Here is a 161-residue protein sequence, read N- to C-terminus: Endoribonuclease YbeY (161 aa).

Residues His-121, His-125, and His-131 each contribute to the Zn(2+) site.

It belongs to the endoribonuclease YbeY family. Zn(2+) is required as a cofactor.

The protein localises to the cytoplasm. In terms of biological role, single strand-specific metallo-endoribonuclease involved in late-stage 70S ribosome quality control and in maturation of the 3' terminus of the 16S rRNA. The polypeptide is Endoribonuclease YbeY (Bordetella avium (strain 197N)).